The sequence spans 255 residues: 5'-nucleotidase SurE (255 aa).

Residues aspartate 8, aspartate 9, serine 40, and asparagine 95 each contribute to the a divalent metal cation site.

Belongs to the SurE nucleotidase family. Requires a divalent metal cation as cofactor.

It is found in the cytoplasm. The catalysed reaction is a ribonucleoside 5'-phosphate + H2O = a ribonucleoside + phosphate. Functionally, nucleotidase that shows phosphatase activity on nucleoside 5'-monophosphates. This chain is 5'-nucleotidase SurE, found in Solidesulfovibrio magneticus (strain ATCC 700980 / DSM 13731 / RS-1) (Desulfovibrio magneticus).